Here is a 487-residue protein sequence, read N- to C-terminus: Cysteine--tRNA ligase (487 aa).

Residue Cys-29 participates in Zn(2+) binding. Positions 31–41 match the 'HIGH' region motif; that stretch reads VTVYDYNHVGH. The Zn(2+) site is built by Cys-209, His-234, and Glu-238. Positions 266 to 270 match the 'KMSKS' region motif; sequence KMSKS. Lys-269 serves as a coordination point for ATP.

Belongs to the class-I aminoacyl-tRNA synthetase family. In terms of assembly, monomer. Requires Zn(2+) as cofactor.

It is found in the cytoplasm. It catalyses the reaction tRNA(Cys) + L-cysteine + ATP = L-cysteinyl-tRNA(Cys) + AMP + diphosphate. The polypeptide is Cysteine--tRNA ligase (Sulfurihydrogenibium sp. (strain YO3AOP1)).